The following is a 78-amino-acid chain: Putative membrane protein insertion efficiency factor (78 aa).

It belongs to the UPF0161 family.

The protein localises to the cell membrane. Could be involved in insertion of integral membrane proteins into the membrane. The polypeptide is Putative membrane protein insertion efficiency factor (Bacillus anthracis (strain A0248)).